Consider the following 99-residue polypeptide: MAARVGVLSVAGFRAAARAGGLLRASKQSSAVSHVPCRTAIATSAGTVLPKPEKVSFGLLRVFTVVIPFLYIGTLISKNFAALLEEHDIFVPEDDDDDD.

A mitochondrion-targeting transit peptide spans 1-39 (MAARVGVLSVAGFRAAARAGGLLRASKQSSAVSHVPCRT). Over 40-57 (AIATSAGTVLPKPEKVSF) the chain is Mitochondrial matrix. Residues 58 to 77 (GLLRVFTVVIPFLYIGTLIS) traverse the membrane as a helical segment. The Mitochondrial intermembrane portion of the chain corresponds to 78–99 (KNFAALLEEHDIFVPEDDDDDD).

Belongs to the SMDT1/EMRE family. Component of the uniplex complex.

The protein resides in the mitochondrion inner membrane. In terms of biological role, essential regulatory subunit of the mitochondrial calcium uniporter complex (uniplex), a complex that mediates calcium uptake into mitochondria. Required to bridge the calcium-sensing proteins micu1 with the calcium-conducting subunit mcu. Acts by mediating activation of mcu and retention of micu1 to the mcu pore, in order to ensure tight regulation of the uniplex complex and appropriate responses to intracellular calcium signaling. The sequence is that of Essential MCU regulator, mitochondrial from Xenopus tropicalis (Western clawed frog).